A 741-amino-acid chain; its full sequence is Catalase-peroxidase 2 (741 aa).

Positions 1–28 (MQKKRVGKSVVAALAIIAMSAGTVAAWA) are cleaved as a signal peptide. The tryptophyl-tyrosyl-methioninium (Trp-Tyr) (with M-254) cross-link spans 107-228 (WHGAGTYRTY…LAATQMGLIY (122 aa)). The active-site Proton acceptor is the His108. The tryptophyl-tyrosyl-methioninium (Tyr-Met) (with W-107) cross-link spans 228 to 254 (YVNPEGPNGNPDPVAAAKDIRDAFGRM). His269 contributes to the heme b binding site.

It belongs to the peroxidase family. Peroxidase/catalase subfamily. In terms of assembly, homodimer or homotetramer. Requires heme b as cofactor. In terms of processing, formation of the three residue Trp-Tyr-Met cross-link is important for the catalase, but not the peroxidase activity of the enzyme.

The catalysed reaction is H2O2 + AH2 = A + 2 H2O. The enzyme catalyses 2 H2O2 = O2 + 2 H2O. In terms of biological role, bifunctional enzyme with both catalase and broad-spectrum peroxidase activity. This is Catalase-peroxidase 2 from Burkholderia ambifaria (strain ATCC BAA-244 / DSM 16087 / CCUG 44356 / LMG 19182 / AMMD) (Burkholderia cepacia (strain AMMD)).